A 343-amino-acid polypeptide reads, in one-letter code: Tribbles homolog 2 (343 aa).

The segment at 25–50 (EELSSIRSAEPSQSFSPNLGSPSPPE) is disordered. Positions 29–45 (SIRSAEPSQSFSPNLGS) are enriched in polar residues. In terms of domain architecture, Protein kinase spans 61 to 308 (IGKYLLLEPL…SQEILDHPWF (248 aa)).

The protein belongs to the protein kinase superfamily. CAMK Ser/Thr protein kinase family. Tribbles subfamily. In terms of tissue distribution, highly expressed in the thyroid, also present in ovary and cerebrum.

It localises to the cytoplasm. It is found in the cytoskeleton. Its function is as follows. Interacts with MAPK kinases and regulates activation of MAP kinases. Does not display kinase activity. This is Tribbles homolog 2 from Canis lupus familiaris (Dog).